The following is a 105-amino-acid chain: Dynein axonemal light chain 4 (105 aa).

This sequence belongs to the dynein light chain family. Consists of at least two heavy chains and a number of intermediate and light chains.

It localises to the cytoplasm. Its subcellular location is the cytoskeleton. The protein localises to the cilium axoneme. Functionally, force generating protein of respiratory cilia. Produces force towards the minus ends of microtubules. Dynein has ATPase activity. This chain is Dynein axonemal light chain 4 (DNAL4), found in Bos taurus (Bovine).